We begin with the raw amino-acid sequence, 230 residues long: 2,3-bisphosphoglycerate-dependent phosphoglycerate mutase (230 aa).

Residues 10–17 (RHGESKWN), 23–24 (TG), Arg62, 89–92 (ERNY), Lys100, 116–117 (RR), and 185–186 (GN) each bind substrate. Residue His11 is the Tele-phosphohistidine intermediate of the active site. Glu89 (proton donor/acceptor) is an active-site residue.

Belongs to the phosphoglycerate mutase family. BPG-dependent PGAM subfamily. Homodimer.

The catalysed reaction is (2R)-2-phosphoglycerate = (2R)-3-phosphoglycerate. Its pathway is carbohydrate degradation; glycolysis; pyruvate from D-glyceraldehyde 3-phosphate: step 3/5. In terms of biological role, catalyzes the interconversion of 2-phosphoglycerate and 3-phosphoglycerate. This Buchnera aphidicola subsp. Cinara cedri (strain Cc) protein is 2,3-bisphosphoglycerate-dependent phosphoglycerate mutase.